Consider the following 264-residue polypeptide: ATP synthase subunit a (264 aa).

A run of 7 helical transmembrane segments spans residues Ile-41 to Leu-61, Ile-99 to Met-119, His-129 to Phe-149, Phe-156 to Ile-176, Ala-194 to Met-214, Gly-217 to Leu-237, and Glu-238 to Lys-258.

It belongs to the ATPase A chain family. In terms of assembly, F-type ATPases have 2 components, CF(1) - the catalytic core - and CF(0) - the membrane proton channel. CF(1) has five subunits: alpha(3), beta(3), gamma(1), delta(1), epsilon(1). CF(0) has three main subunits: a, b and c.

The protein resides in the mitochondrion inner membrane. Mitochondrial membrane ATP synthase (F(1)F(0) ATP synthase or Complex V) produces ATP from ADP in the presence of a proton gradient across the membrane which is generated by electron transport complexes of the respiratory chain. F-type ATPases consist of two structural domains, F(1) - containing the extramembraneous catalytic core and F(0) - containing the membrane proton channel, linked together by a central stalk and a peripheral stalk. During catalysis, ATP synthesis in the catalytic domain of F(1) is coupled via a rotary mechanism of the central stalk subunits to proton translocation. Key component of the proton channel; it may play a direct role in the translocation of protons across the membrane. The chain is ATP synthase subunit a (ATP6) from Podospora anserina (strain S / ATCC MYA-4624 / DSM 980 / FGSC 10383) (Pleurage anserina).